We begin with the raw amino-acid sequence, 862 residues long: Protein kintoun (862 aa).

4 disordered regions span residues 208–229, 564–602, 626–670, and 743–854; these read KLLPPLPNVPAPGKTGSERTTK, TKREEHGEPECDEKDGSEAEKARTLQKAKRNSRKKKKER, GEGA…STMP, and RREV…QFKS. The segment covering 564–586 has biased composition (basic and acidic residues); sequence TKREEHGEPECDEKDGSEAEKAR. Over residues 587–601 the composition is skewed to basic residues; sequence TLQKAKRNSRKKKKE. 2 stretches are compositionally biased toward basic and acidic residues: residues 748–757 and 766–785; these read RRADARRMSE and KDAHHHDDEHCSSSDQHDEK.

Belongs to the PIH1 family. Kintoun subfamily.

It is found in the cytoplasm. Required for cytoplasmic pre-assembly of axonemal dyneins, thereby playing a central role in motility in cilia and flagella. Involved in pre-assembly of dynein arm complexes in the cytoplasm before intraflagellar transport loads them for the ciliary compartment. In Anopheles gambiae (African malaria mosquito), this protein is Protein kintoun.